The following is a 130-amino-acid chain: Small ribosomal subunit protein uS8x (130 aa).

This sequence belongs to the universal ribosomal protein uS8 family.

The chain is Small ribosomal subunit protein uS8x (RPS15AD) from Arabidopsis thaliana (Mouse-ear cress).